Consider the following 2537-residue polypeptide: Centrosomal protein of 192 kDa (2537 aa).

Disordered stretches follow at residues 69–138 and 288–308; these read FSVP…ATES and HSSETTHKESEESQVICLPGT. Low complexity predominate over residues 70 to 81; that stretch reads SVPSGSSPGSQS. Polar residues predominate over residues 106–122; that stretch reads VESQRLSNALSKQSALQ. A compositionally biased stretch (basic and acidic residues) spans 288–298; that stretch reads HSSETTHKESE. A Phosphoserine modification is found at S812. Disordered stretches follow at residues 950–1021, 1043–1064, 1101–1158, and 1182–1234; these read VTFE…QQQP, VSEPESSYPTTATDDALEDRKS, KGTL…WTSN, and ATSH…STVH. The span at 960–970 shows a compositional bias: polar residues; sequence PKNSDLKNTSP. Positions 984–1005 are enriched in low complexity; the sequence is FRPSTSPLSHSSPSEISGTSSS. 2 stretches are compositionally biased toward polar residues: residues 1046–1055 and 1103–1112; these read PESSYPTTAT and TLSSIIQNNS. Basic and acidic residues predominate over residues 1128 to 1141; it reads EYVKPDFRWSKDPS. Residues 1142 to 1158 show a composition bias toward polar residues; it reads SKSGNLLETSEVGWTSN. Residues 1195-1207 are compositionally biased toward basic and acidic residues; the sequence is EDQRISPKDKSTA. The span at 1213–1234 shows a compositional bias: polar residues; the sequence is GQVSHQTTSENQCTPIPSSTVH. S1755, S2098, and S2110 each carry phosphoserine. At P2313 the chain carries Hydroxyproline.

In terms of assembly, interacts with SHBG. Interacts with PLK4; this interaction mediates the formation of a ternary complex composed by PLK4, TENT5C and CEP192. Interacts with CCDC66. Post-translationally, hydroxylation by PHD1/EGLN2 at Pro-2313 promotes ubiquitination. In terms of processing, ubiquitinated by a SCF(SKP2) complex following proline hydroxylation. Ubiquitinated in a FBXL13-dependent manner, leading to proteasomal degradation.

The protein resides in the cytoplasm. It localises to the cytoskeleton. The protein localises to the microtubule organizing center. It is found in the centrosome. Its subcellular location is the centriole. In terms of biological role, required for mitotic centrosome maturation and bipolar spindle assembly. Appears to be a major regulator of pericentriolar material (PCM) recruitment, centrosome maturation, and centriole duplication. Centrosome-specific activating scaffold for AURKA and PLK1. This Homo sapiens (Human) protein is Centrosomal protein of 192 kDa.